The following is a 685-amino-acid chain: E3 ubiquitin ligase Rnf157 (685 aa).

Glycine 2 carries N-myristoyl glycine lipidation. An RING-type zinc finger spans residues 276-315 (ECVVCLSDVRDTLILPCRHLCLCNTCADTLRYQANNCPIC). The D-box 1 motif lies at 329–332 (RKKL). Disordered regions lie at residues 339–361 (SFNP…ENIP), 433–584 (LSKS…AGEQ), and 650–672 (LGGR…EASA). Residues 434–443 (SKSISQNSSV) show a composition bias toward low complexity. Over residues 478-537 (ESENLTLSSSGAVDQSSCTGTPLSSTISSPEDPASSSLAQSVMSMASSQISTDTVSSMSG) the composition is skewed to polar residues. Residues 552–561 (PSPRAASRAP) are compositionally biased toward low complexity. Positions 657-660 (ARPR) match the D-box 2 motif.

In terms of assembly, interacts with APBB1. Interacts with CHD1; CHD1-binding controls RNF157 stability. Also interacts with ATRN, MEGF8, TECR, MSI2, PLRG1, BYSL, MTERF3, PSMA1, MRPS18B, PRPF4, FASTKD2, SLC25A1, SMU1, CNOT9, MRPS2, MAGT1, FXR2, EMD, PSMD8, HDAC1, RAN, HSD17B12, TXNDC5 and MRPL19.

It localises to the cytoplasm. The enzyme catalyses S-ubiquitinyl-[E2 ubiquitin-conjugating enzyme]-L-cysteine + [acceptor protein]-L-lysine = [E2 ubiquitin-conjugating enzyme]-L-cysteine + N(6)-ubiquitinyl-[acceptor protein]-L-lysine.. In terms of biological role, E3 ubiquitin ligase that ubiquitinates APBB1 for its degradation by the proteasome and thus prevents apoptosis and promotes survival of neurons. Has a dual role in neurons as it is also required for dendrite growth and maintenance for which its ligase activity is not critical. May act as a scaffold molecule to regulate this process. Acts as a downstream effector of the interconnected PI3K and MAPK signaling pathways and thus participates in the regulation of the cell cycle. The polypeptide is E3 ubiquitin ligase Rnf157 (Rnf157) (Mus musculus (Mouse)).